Reading from the N-terminus, the 1493-residue chain is Mitogen-activated protein kinase kinase kinase 1 (1493 aa).

Low complexity predominate over residues 1-23 (MAAAAGDRASSSGFPGAAAASPE). Disordered regions lie at residues 1 to 178 (MAAA…PEER) and 194 to 300 (HEWL…EETS). Residue alanine 2 is modified to N-acetylalanine. Serine 21 is subject to Phosphoserine. Over residues 24–35 (AGGGGGGGGALQ) the composition is skewed to gly residues. Positions 36–46 (GSGAPAAGAAG) are enriched in low complexity. Residues 89–99 (PPCPSTSPSPE) are compositionally biased toward pro residues. Residues 140–156 (ARSPAGAEPPSAAAPSG) show a composition bias toward low complexity. Serine 142 is modified (phosphoserine). Positions 157 to 178 (REMENKETLKGLHKMEDRPEER) are enriched in basic and acidic residues. Residues 235–256 (SAAPAPKGRRSPSPGSSPSGRS) show a composition bias toward low complexity. The residue at position 270 (serine 270) is a Phosphoserine. Threonine 280 is subject to Phosphothreonine. Residues serine 287, serine 292, and serine 295 each carry the phosphoserine modification. The SWIM-type zinc finger occupies 333 to 361 (YRVFIGPQNCSCGRGAFCIHLLFVMLRVF). The span at 411–428 (SNSHTLSSSSTSTSSSEN) shows a compositional bias: low complexity. The segment at 411–431 (SNSHTLSSSSTSTSSSENSIK) is disordered. The RING-type zinc finger occupies 438 to 487 (CPICLLGMLDEESLTVCEDGCRNKLHHHCMSIWAEECRRNREPLICPLCR). A phosphoserine mark is found at serine 502 and serine 526. 2 disordered regions span residues 506–531 (SPAS…RRNQ) and 895–914 (EHTV…RLSA). Positions 512–527 (AVQQPSSPQQPVAGSQ) are enriched in low complexity. Phosphoserine is present on serine 915. Disordered stretches follow at residues 927–957 (SVGL…LNSS) and 992–1066 (PCKI…TLDL). Over residues 998-1013 (ASPQTQRKFSLQFQRN) the composition is skewed to polar residues. 2 positions are modified to phosphoserine: serine 999 and serine 1024. The segment covering 1049 to 1063 (GSTSKLGDATKSSMT) has biased composition (polar residues). The Protein kinase domain occupies 1224–1489 (WLKGQQIGLG…SRELLKHPVF (266 aa)). ATP-binding positions include 1230-1238 (IGLGAFSSC) and lysine 1253. Aspartate 1350 functions as the Proton acceptor in the catalytic mechanism. Residues threonine 1381 and threonine 1393 each carry the phosphothreonine; by autocatalysis modification.

The protein belongs to the protein kinase superfamily. STE Ser/Thr protein kinase family. MAP kinase kinase kinase subfamily. As to quaternary structure, binds both upstream activators and downstream substrates in multimolecular complexes through its N-terminus. Oligomerizes after binding MAP4K2 or TRAF2. Interacts with AXIN1. Interacts (via the kinase catalytic domain) with STK38. Interacts with GRIPAP1. Requires Mg(2+) as cofactor. Autophosphorylated. As to expression, highly expressed in the heart and spleen while a lower level expression is seen in the liver.

It carries out the reaction L-seryl-[protein] + ATP = O-phospho-L-seryl-[protein] + ADP + H(+). The enzyme catalyses L-threonyl-[protein] + ATP = O-phospho-L-threonyl-[protein] + ADP + H(+). Activated by autophosphorylation on Thr-1381 and Thr-1393 following oligomerization. Its function is as follows. Component of a protein kinase signal transduction cascade. Activates the ERK and JNK kinase pathways by phosphorylation of MAP2K1 and MAP2K4. May phosphorylate the MAPK8/JNK1 kinase. Activates CHUK and IKBKB, the central protein kinases of the NF-kappa-B pathway. This is Mitogen-activated protein kinase kinase kinase 1 (Map3k1) from Mus musculus (Mouse).